A 185-amino-acid chain; its full sequence is ATP synthase subunit delta (185 aa).

Belongs to the ATPase delta chain family. In terms of assembly, F-type ATPases have 2 components, F(1) - the catalytic core - and F(0) - the membrane proton channel. F(1) has five subunits: alpha(3), beta(3), gamma(1), delta(1), epsilon(1). CF(0) has four main subunits: a(1), b(1), b'(1) and c(10-14). The alpha and beta chains form an alternating ring which encloses part of the gamma chain. F(1) is attached to F(0) by a central stalk formed by the gamma and epsilon chains, while a peripheral stalk is formed by the delta, b and b' chains.

The protein resides in the cellular thylakoid membrane. In terms of biological role, f(1)F(0) ATP synthase produces ATP from ADP in the presence of a proton or sodium gradient. F-type ATPases consist of two structural domains, F(1) containing the extramembraneous catalytic core and F(0) containing the membrane proton channel, linked together by a central stalk and a peripheral stalk. During catalysis, ATP synthesis in the catalytic domain of F(1) is coupled via a rotary mechanism of the central stalk subunits to proton translocation. Functionally, this protein is part of the stalk that links CF(0) to CF(1). It either transmits conformational changes from CF(0) to CF(1) or is implicated in proton conduction. This chain is ATP synthase subunit delta, found in Synechocystis sp. (strain ATCC 27184 / PCC 6803 / Kazusa).